Reading from the N-terminus, the 364-residue chain is DNA replication and repair protein RecF (364 aa).

Position 30–37 (30–37) interacts with ATP; that stretch reads GENAQGKT.

Belongs to the RecF family.

Its subcellular location is the cytoplasm. Functionally, the RecF protein is involved in DNA metabolism; it is required for DNA replication and normal SOS inducibility. RecF binds preferentially to single-stranded, linear DNA. It also seems to bind ATP. The protein is DNA replication and repair protein RecF of Streptococcus suis (strain 98HAH33).